Reading from the N-terminus, the 224-residue chain is UPF0173 metal-dependent hydrolase EF_1371 (224 aa).

Belongs to the UPF0173 family.

The chain is UPF0173 metal-dependent hydrolase EF_1371 from Enterococcus faecalis (strain ATCC 700802 / V583).